A 370-amino-acid chain; its full sequence is Spermidine/putrescine import ATP-binding protein PotA (370 aa).

The region spanning 6-236 (IELHQVTKRY…PINHFVADFI (231 aa)) is the ABC transporter domain. Residue 38-45 (GPSGCGKT) participates in ATP binding.

The protein belongs to the ABC transporter superfamily. Spermidine/putrescine importer (TC 3.A.1.11.1) family. The complex is composed of two ATP-binding proteins (PotA), two transmembrane proteins (PotB and PotC) and a solute-binding protein (PotD).

Its subcellular location is the cell membrane. The enzyme catalyses ATP + H2O + polyamine-[polyamine-binding protein]Side 1 = ADP + phosphate + polyamineSide 2 + [polyamine-binding protein]Side 1.. Functionally, part of the ABC transporter complex PotABCD involved in spermidine/putrescine import. Responsible for energy coupling to the transport system. This is Spermidine/putrescine import ATP-binding protein PotA from Levilactobacillus brevis (strain ATCC 367 / BCRC 12310 / CIP 105137 / JCM 1170 / LMG 11437 / NCIMB 947 / NCTC 947) (Lactobacillus brevis).